We begin with the raw amino-acid sequence, 330 residues long: Type II restriction enzyme Cfr9I (330 aa).

The protein belongs to the XcyI type II restriction endonuclease family. Mg(2+) serves as cofactor.

The catalysed reaction is Endonucleolytic cleavage of DNA to give specific double-stranded fragments with terminal 5'-phosphates.. An E and P subtype restriction enzyme that recognizes the double-stranded sequence 5'-CCCGGG-3' and cleaves after C-1. This chain is Type II restriction enzyme Cfr9I (cfr9IR), found in Citrobacter freundii.